The sequence spans 177 residues: Probable prophage lysozyme (177 aa).

The active-site Proton donor is the Glu-35. Residue Asp-44 is the Nucleophile of the active site.

This sequence belongs to the glycosyl hydrolase 24 family.

The catalysed reaction is Hydrolysis of (1-&gt;4)-beta-linkages between N-acetylmuramic acid and N-acetyl-D-glucosamine residues in a peptidoglycan and between N-acetyl-D-glucosamine residues in chitodextrins.. Essential for lysis of bacterial cell wall, by showing cell wall hydrolyzing activity. The sequence is that of Probable prophage lysozyme (rrrQ) from Escherichia coli (strain K12).